A 467-amino-acid polypeptide reads, in one-letter code: Light-independent protochlorophyllide reductase subunit N (467 aa).

Cysteine 23, cysteine 48, and cysteine 108 together coordinate [4Fe-4S] cluster.

The protein belongs to the BchN/ChlN family. As to quaternary structure, protochlorophyllide reductase is composed of three subunits; ChlL, ChlN and ChlB. Forms a heterotetramer of two ChlB and two ChlN subunits. [4Fe-4S] cluster serves as cofactor.

It carries out the reaction chlorophyllide a + oxidized 2[4Fe-4S]-[ferredoxin] + 2 ADP + 2 phosphate = protochlorophyllide a + reduced 2[4Fe-4S]-[ferredoxin] + 2 ATP + 2 H2O. It participates in porphyrin-containing compound metabolism; chlorophyll biosynthesis (light-independent). Its function is as follows. Component of the dark-operative protochlorophyllide reductase (DPOR) that uses Mg-ATP and reduced ferredoxin to reduce ring D of protochlorophyllide (Pchlide) to form chlorophyllide a (Chlide). This reaction is light-independent. The NB-protein (ChlN-ChlB) is the catalytic component of the complex. This chain is Light-independent protochlorophyllide reductase subunit N, found in Trichormus variabilis (strain ATCC 29413 / PCC 7937) (Anabaena variabilis).